A 373-amino-acid polypeptide reads, in one-letter code: MKLPVTYKVEDKDGKARAGVITTLHGEIETPVFMPVGTQATVKTMSKEELLDIGSEIILGNTYHLYLRPNDELIARLGGLHKFMNWDRPILTDSGGFQVFSLGSLRKIKEEGVYFSSHIDGSKHFISPEKSIQIQNNLGSDIVMLFDECPPGLSTREYIIPSIERTTRWAKRCVEAHQKKDIQGLFAIVQGGIYEDLRQKSLDELSEMDENFSGYAIGGLAVGEPREDMYRILDYIVEKCPEEKPRYLMGVGEPVDMLNAVESGIDMMDCVQPTRLARHGTVFTKDGRLVIKSERYKEDTKPLDEECDCYVCKNYSRAYIRHLIKVQEVLGLRLTSYHNLYFLIKLMKDAREAIKEKRFKEFKEKFIQRYEGK.

The active-site Proton acceptor is Asp-93. Substrate is bound by residues 93–97 (DSGGF), Asp-147, Gln-190, and Gly-219. An RNA binding region spans residues 250 to 256 (GVGEPVD). The Nucleophile role is filled by Asp-269. The RNA binding; important for wobble base 34 recognition stretch occupies residues 274–278 (TRLAR). 4 residues coordinate Zn(2+): Cys-307, Cys-309, Cys-312, and His-338.

The protein belongs to the queuine tRNA-ribosyltransferase family. Homodimer. Within each dimer, one monomer is responsible for RNA recognition and catalysis, while the other monomer binds to the replacement base PreQ1. Zn(2+) serves as cofactor.

The catalysed reaction is 7-aminomethyl-7-carbaguanine + guanosine(34) in tRNA = 7-aminomethyl-7-carbaguanosine(34) in tRNA + guanine. The protein operates within tRNA modification; tRNA-queuosine biosynthesis. Catalyzes the base-exchange of a guanine (G) residue with the queuine precursor 7-aminomethyl-7-deazaguanine (PreQ1) at position 34 (anticodon wobble position) in tRNAs with GU(N) anticodons (tRNA-Asp, -Asn, -His and -Tyr). Catalysis occurs through a double-displacement mechanism. The nucleophile active site attacks the C1' of nucleotide 34 to detach the guanine base from the RNA, forming a covalent enzyme-RNA intermediate. The proton acceptor active site deprotonates the incoming PreQ1, allowing a nucleophilic attack on the C1' of the ribose to form the product. After dissociation, two additional enzymatic reactions on the tRNA convert PreQ1 to queuine (Q), resulting in the hypermodified nucleoside queuosine (7-(((4,5-cis-dihydroxy-2-cyclopenten-1-yl)amino)methyl)-7-deazaguanosine). The chain is Queuine tRNA-ribosyltransferase from Fusobacterium nucleatum subsp. nucleatum (strain ATCC 25586 / DSM 15643 / BCRC 10681 / CIP 101130 / JCM 8532 / KCTC 2640 / LMG 13131 / VPI 4355).